Consider the following 210-residue polypeptide: Probable molybdenum cofactor guanylyltransferase (210 aa).

Residues 18–20 (LAG), K31, N59, D86, and D111 each bind GTP. Residue D111 participates in Mg(2+) binding.

The protein belongs to the MobA family. Mg(2+) serves as cofactor.

Its subcellular location is the cytoplasm. It carries out the reaction Mo-molybdopterin + GTP + H(+) = Mo-molybdopterin guanine dinucleotide + diphosphate. Transfers a GMP moiety from GTP to Mo-molybdopterin (Mo-MPT) cofactor (Moco or molybdenum cofactor) to form Mo-molybdopterin guanine dinucleotide (Mo-MGD) cofactor. This chain is Probable molybdenum cofactor guanylyltransferase (nasC), found in Haloferax mediterranei (strain ATCC 33500 / DSM 1411 / JCM 8866 / NBRC 14739 / NCIMB 2177 / R-4) (Halobacterium mediterranei).